Consider the following 440-residue polypeptide: ATP-dependent protease ATPase subunit HslU (440 aa).

ATP contacts are provided by residues V18, 60 to 65 (GVGKTE), D254, E319, and R391.

This sequence belongs to the ClpX chaperone family. HslU subfamily. As to quaternary structure, a double ring-shaped homohexamer of HslV is capped on each side by a ring-shaped HslU homohexamer. The assembly of the HslU/HslV complex is dependent on binding of ATP.

The protein resides in the cytoplasm. Functionally, ATPase subunit of a proteasome-like degradation complex; this subunit has chaperone activity. The binding of ATP and its subsequent hydrolysis by HslU are essential for unfolding of protein substrates subsequently hydrolyzed by HslV. HslU recognizes the N-terminal part of its protein substrates and unfolds these before they are guided to HslV for hydrolysis. In Cellvibrio japonicus (strain Ueda107) (Pseudomonas fluorescens subsp. cellulosa), this protein is ATP-dependent protease ATPase subunit HslU.